A 95-amino-acid polypeptide reads, in one-letter code: Aspartyl/glutamyl-tRNA(Asn/Gln) amidotransferase subunit C (95 aa).

It belongs to the GatC family. As to quaternary structure, heterotrimer of A, B and C subunits.

The catalysed reaction is L-glutamyl-tRNA(Gln) + L-glutamine + ATP + H2O = L-glutaminyl-tRNA(Gln) + L-glutamate + ADP + phosphate + H(+). The enzyme catalyses L-aspartyl-tRNA(Asn) + L-glutamine + ATP + H2O = L-asparaginyl-tRNA(Asn) + L-glutamate + ADP + phosphate + 2 H(+). Functionally, allows the formation of correctly charged Asn-tRNA(Asn) or Gln-tRNA(Gln) through the transamidation of misacylated Asp-tRNA(Asn) or Glu-tRNA(Gln) in organisms which lack either or both of asparaginyl-tRNA or glutaminyl-tRNA synthetases. The reaction takes place in the presence of glutamine and ATP through an activated phospho-Asp-tRNA(Asn) or phospho-Glu-tRNA(Gln). The polypeptide is Aspartyl/glutamyl-tRNA(Asn/Gln) amidotransferase subunit C (Dinoroseobacter shibae (strain DSM 16493 / NCIMB 14021 / DFL 12)).